Consider the following 150-residue polypeptide: Putative antitoxin VapB45 (150 aa).

Residues 124–150 (AQRPVAAGRPRPRPQRPVSDRVSDQRR) form a disordered region. A compositionally biased stretch (basic and acidic residues) spans 141 to 150 (VSDRVSDQRR).

The protein belongs to the phD/YefM antitoxin family.

Its function is as follows. Possibly the antitoxin component of a type II toxin-antitoxin (TA) system. Its cognate toxin is VapC45 (Potential). In Mycobacterium tuberculosis (strain CDC 1551 / Oshkosh), this protein is Putative antitoxin VapB45 (vapB45).